A 320-amino-acid chain; its full sequence is Probable cell division protein WhiA (320 aa).

Residues 276–310 (TLKELGEMVESGKVSKSGVNHRLRKIDELAEKLRA) constitute a DNA-binding region (H-T-H motif).

Belongs to the WhiA family.

Functionally, involved in cell division and chromosome segregation. In Halalkalibacterium halodurans (strain ATCC BAA-125 / DSM 18197 / FERM 7344 / JCM 9153 / C-125) (Bacillus halodurans), this protein is Probable cell division protein WhiA.